We begin with the raw amino-acid sequence, 288 residues long: MEGKEEDVRLGANKFSERQPIGTAAQGSDDKDYKEPPPAPLFEPGELKSWSFYRAGIAEFMATFLFLYITVLTVMGVNNSTSKCATVGIQGIAWSFGGMIFALVYCTAGISGGHINPAVTFGLFLARKLSLTRALFYMVMQCLGAICGAGVVKGFQKGLYETTGGGANVVAPGYTKGDGLGAEIVGTFILVYTVFSATDAKRNARDSHVPILAPLPIGFAVFLVHLATIPITGTGINPARSLGAAIIYNRGHAWDDHWIFWVGPFIGAALAAIYHQVVIRAIPFKSRS.

Positions 1-37 are disordered; the sequence is MEGKEEDVRLGANKFSERQPIGTAAQGSDDKDYKEPP. 2 consecutive transmembrane segments (helical) span residues 57–77 and 92–114; these read IAEF…VMGV and IAWS…SGGH. An NPA 1 motif is present at residues 116-118; that stretch reads NPA. 3 helical membrane-spanning segments follow: residues 135-155, 177-197, and 211-231; these read LFYM…VKGF, GDGL…VFSA, and ILAP…TIPI. An NPA 2 motif is present at residues 237 to 239; it reads NPA. A helical transmembrane segment spans residues 259-279; it reads IFWVGPFIGAALAAIYHQVVI.

Belongs to the MIP/aquaporin (TC 1.A.8) family. PIP (TC 1.A.8.11) subfamily. As to expression, expressed in roots, leaves and anthers.

Its subcellular location is the cell membrane. Aquaporins facilitate the transport of water and small neutral solutes across cell membranes. This is Probable aquaporin PIP1-2 (PIP1-2) from Oryza sativa subsp. japonica (Rice).